The following is a 171-amino-acid chain: Dual specificity protein phosphatase OPG106 (171 aa).

Positions 23–171 (SPTIMTRVTN…IIEKYVIDKN (149 aa)) constitute a Tyrosine-protein phosphatase domain. The active-site Phosphocysteine intermediate is Cys-110.

It belongs to the protein-tyrosine phosphatase family. Non-receptor class dual specificity subfamily. As to quaternary structure, homodimer.

Its subcellular location is the virion. The protein resides in the host cytoplasm. It carries out the reaction O-phospho-L-tyrosyl-[protein] + H2O = L-tyrosyl-[protein] + phosphate. The catalysed reaction is O-phospho-L-seryl-[protein] + H2O = L-seryl-[protein] + phosphate. Inhibited by NSC-62914, NSC-28086, NSC-105687, NSC-23173, 540211 and 217691 with IC50 values of 48, 51, 212, 342, 4 and 11 uM, respectively. Serine/tyrosine phosphatase which down-regulates cellular antiviral response by dephosphorylating activated host STAT1 and blocking interferon (IFN)-stimulated innate immune responses. Dephosphorylates the OPG144 protein. This is Dual specificity protein phosphatase OPG106 (OPG106) from Homo sapiens (Human).